We begin with the raw amino-acid sequence, 285 residues long: 4-diphosphocytidyl-2-C-methyl-D-erythritol kinase (285 aa).

Lysine 28 is a catalytic residue. Residue 109 to 119 coordinates ATP; the sequence is PVAAGLGGGSA. Residue aspartate 148 is part of the active site.

This sequence belongs to the GHMP kinase family. IspE subfamily.

It carries out the reaction 4-CDP-2-C-methyl-D-erythritol + ATP = 4-CDP-2-C-methyl-D-erythritol 2-phosphate + ADP + H(+). It functions in the pathway isoprenoid biosynthesis; isopentenyl diphosphate biosynthesis via DXP pathway; isopentenyl diphosphate from 1-deoxy-D-xylulose 5-phosphate: step 3/6. In terms of biological role, catalyzes the phosphorylation of the position 2 hydroxy group of 4-diphosphocytidyl-2C-methyl-D-erythritol. The protein is 4-diphosphocytidyl-2-C-methyl-D-erythritol kinase of Novosphingobium aromaticivorans (strain ATCC 700278 / DSM 12444 / CCUG 56034 / CIP 105152 / NBRC 16084 / F199).